The chain runs to 451 residues: MGKYFGTDGVRGVANQELTPELAFKLGRYGGYVLAHNKGEKHPRVLVGRDTRVSGEMLESALIAGLISIGAEVMRLGIISTPGVAYLTRDMGAELGVMISASHNPVADNGIKFFGSDGFKLSDEQENEIEALLDQENPELPRPVGNDIVHYSDYFEGAQKYLSYLKSTVDVNFEGLKIVLDGANGSTSSLAPFLFGDLEADTETIGCSPDGYNINEKCGSTHPEKLAEKVVETESDFGLAFDGDGDRIIAVDENGQIVDGDQIMFIIGQEMHKNQELNNDMIVSTVMSNLGFYKALEQEGIKSNKTKVGDRYVVEEMRRGNYNLGGEQSGHIVMMDYNTTGDGLLTGIQLASVIKMTGKSLSELAGQMKKYPQSLINVRVTDKYRVEENVDVKEVMTKVEVEMNGEGRILVRPSGTEPLVRVMVEAATDEDAERYAQQIADVVQDKMGLDK.

The Phosphoserine intermediate role is filled by Ser102. Mg(2+)-binding residues include Ser102, Asp242, Asp244, and Asp246. Position 102 is a phosphoserine (Ser102).

It belongs to the phosphohexose mutase family. The cofactor is Mg(2+). Activated by phosphorylation.

It catalyses the reaction alpha-D-glucosamine 1-phosphate = D-glucosamine 6-phosphate. Catalyzes the conversion of glucosamine-6-phosphate to glucosamine-1-phosphate. The protein is Phosphoglucosamine mutase of Staphylococcus aureus (strain bovine RF122 / ET3-1).